An 844-amino-acid polypeptide reads, in one-letter code: DNA mismatch repair protein MutS (844 aa).

An ATP-binding site is contributed by 610–617 (GPNMGGKS).

Belongs to the DNA mismatch repair MutS family.

Functionally, this protein is involved in the repair of mismatches in DNA. It is possible that it carries out the mismatch recognition step. This protein has a weak ATPase activity. The sequence is that of DNA mismatch repair protein MutS from Francisella tularensis subsp. novicida (strain U112).